A 396-amino-acid polypeptide reads, in one-letter code: Chorismate synthase (396 aa).

The NADP(+) site is built by arginine 41 and arginine 47. FMN is bound by residues 130 to 132 (RAS), glycine 298, 313 to 317 (KPIPT), and arginine 339.

The protein belongs to the chorismate synthase family. In terms of assembly, homotetramer. FMNH2 serves as cofactor.

The enzyme catalyses 5-O-(1-carboxyvinyl)-3-phosphoshikimate = chorismate + phosphate. It functions in the pathway metabolic intermediate biosynthesis; chorismate biosynthesis; chorismate from D-erythrose 4-phosphate and phosphoenolpyruvate: step 7/7. In terms of biological role, catalyzes the anti-1,4-elimination of the C-3 phosphate and the C-6 proR hydrogen from 5-enolpyruvylshikimate-3-phosphate (EPSP) to yield chorismate, which is the branch point compound that serves as the starting substrate for the three terminal pathways of aromatic amino acid biosynthesis. This reaction introduces a second double bond into the aromatic ring system. The sequence is that of Chorismate synthase from Syntrophomonas wolfei subsp. wolfei (strain DSM 2245B / Goettingen).